Reading from the N-terminus, the 1256-residue chain is Putative protein DDB_G0292252 (1256 aa).

Disordered regions lie at residues 1 to 53 (MSDD…NNNN), 145 to 243 (LLNG…SISR), 898 to 951 (EQQQ…PVET), and 1069 to 1136 (SHPT…ATIS). Residues 147 to 214 (NGNNSNNNSN…NGNNINTSNG (68 aa)) show a composition bias toward low complexity. Polar residues predominate over residues 222 to 243 (QTESTEQDFTSTSQNSTPSISR). Composition is skewed to low complexity over residues 898–916 (EQQQ…SNNE) and 925–942 (TTAA…TTTT). Residues 1069–1079 (SHPTIQSTSSP) show a composition bias toward polar residues. Low complexity predominate over residues 1080-1136 (STSSSNNNNSTTTATNNNGNNGNNNNGNGNNNNNNNNNNNNNNNNNNNNNNGPATIS).

In Dictyostelium discoideum (Social amoeba), this protein is Putative protein DDB_G0292252.